A 142-amino-acid chain; its full sequence is Cytochrome c-type biogenesis protein CcmE (142 aa).

The Cytoplasmic portion of the chain corresponds to 1-2; it reads MK. Residues 3–23 form a helical; Signal-anchor for type II membrane protein membrane-spanning segment; that stretch reads GKYLLGILVILGALGYMVFGG. The Periplasmic portion of the chain corresponds to 24–142; that stretch reads LGRNLVYFLT…EVRKLIEEAQ (119 aa). Heme-binding residues include His118 and Tyr122.

This sequence belongs to the CcmE/CycJ family.

It localises to the cell inner membrane. Heme chaperone required for the biogenesis of c-type cytochromes. Transiently binds heme delivered by CcmC and transfers the heme to apo-cytochromes in a process facilitated by CcmF and CcmH. The chain is Cytochrome c-type biogenesis protein CcmE from Thermus thermophilus (strain ATCC BAA-163 / DSM 7039 / HB27).